A 189-amino-acid chain; its full sequence is 3-hydroxyanthranilate 3,4-dioxygenase (189 aa).

Arg-50 serves as a coordination point for O2. Fe cation-binding residues include His-54, Glu-60, and His-102. A substrate-binding site is contributed by Glu-60. Residues Arg-106 and Glu-116 each contribute to the substrate site. A divalent metal cation is bound by residues Cys-131, Cys-136, Cys-170, and Cys-173.

Belongs to the 3-HAO family. It depends on Fe(2+) as a cofactor.

Its subcellular location is the cytoplasm. The enzyme catalyses 3-hydroxyanthranilate + O2 = (2Z,4Z)-2-amino-3-carboxymuconate 6-semialdehyde. It functions in the pathway cofactor biosynthesis; NAD(+) biosynthesis; quinolinate from L-kynurenine: step 3/3. Its function is as follows. Catalyzes the oxidative ring opening of 3-hydroxyanthranilate to 2-amino-3-carboxymuconate semialdehyde, which spontaneously cyclizes to quinolinate. In Aspergillus niger (strain ATCC MYA-4892 / CBS 513.88 / FGSC A1513), this protein is 3-hydroxyanthranilate 3,4-dioxygenase (bna1).